The sequence spans 246 residues: Bis(5'-nucleosyl)-tetraphosphatase PrpE [asymmetrical] (246 aa).

This sequence belongs to the PrpE family. Ni(2+) is required as a cofactor.

It catalyses the reaction P(1),P(4)-bis(5'-guanosyl) tetraphosphate + H2O = GMP + GTP + 2 H(+). In terms of biological role, asymmetrically hydrolyzes Ap4p to yield AMP and ATP. This is Bis(5'-nucleosyl)-tetraphosphatase PrpE [asymmetrical] from Bacillus cereus (strain ATCC 14579 / DSM 31 / CCUG 7414 / JCM 2152 / NBRC 15305 / NCIMB 9373 / NCTC 2599 / NRRL B-3711).